The following is a 227-amino-acid chain: Cytochrome c oxidase subunit 2 (227 aa).

The Mitochondrial intermembrane portion of the chain corresponds to 1-14; sequence MAYPFQLGLQDATS. Residues 15 to 45 form a helical membrane-spanning segment; it reads PIMEELTNFHDHTLMIVFLISSLVLYLISLM. Topologically, residues 46 to 59 are mitochondrial matrix; it reads LSTKLIHTSTMDAQ. A helical membrane pass occupies residues 60 to 87; sequence EVETIWTILPAIILIMIALPSLRILYMM. Residues 88-227 are Mitochondrial intermembrane-facing; the sequence is DEINNPALTV…LFENWSISMS (140 aa). Positions 161, 196, 198, 200, 204, and 207 each coordinate Cu cation. E198 contacts Mg(2+).

Belongs to the cytochrome c oxidase subunit 2 family. In terms of assembly, component of the cytochrome c oxidase (complex IV, CIV), a multisubunit enzyme composed of 14 subunits. The complex is composed of a catalytic core of 3 subunits MT-CO1, MT-CO2 and MT-CO3, encoded in the mitochondrial DNA, and 11 supernumerary subunits COX4I, COX5A, COX5B, COX6A, COX6B, COX6C, COX7A, COX7B, COX7C, COX8 and NDUFA4, which are encoded in the nuclear genome. The complex exists as a monomer or a dimer and forms supercomplexes (SCs) in the inner mitochondrial membrane with NADH-ubiquinone oxidoreductase (complex I, CI) and ubiquinol-cytochrome c oxidoreductase (cytochrome b-c1 complex, complex III, CIII), resulting in different assemblies (supercomplex SCI(1)III(2)IV(1) and megacomplex MCI(2)III(2)IV(2)). Found in a complex with TMEM177, COA6, COX18, COX20, SCO1 and SCO2. Interacts with TMEM177 in a COX20-dependent manner. Interacts with COX20. Interacts with COX16. Requires Cu cation as cofactor.

It is found in the mitochondrion inner membrane. It catalyses the reaction 4 Fe(II)-[cytochrome c] + O2 + 8 H(+)(in) = 4 Fe(III)-[cytochrome c] + 2 H2O + 4 H(+)(out). In terms of biological role, component of the cytochrome c oxidase, the last enzyme in the mitochondrial electron transport chain which drives oxidative phosphorylation. The respiratory chain contains 3 multisubunit complexes succinate dehydrogenase (complex II, CII), ubiquinol-cytochrome c oxidoreductase (cytochrome b-c1 complex, complex III, CIII) and cytochrome c oxidase (complex IV, CIV), that cooperate to transfer electrons derived from NADH and succinate to molecular oxygen, creating an electrochemical gradient over the inner membrane that drives transmembrane transport and the ATP synthase. Cytochrome c oxidase is the component of the respiratory chain that catalyzes the reduction of oxygen to water. Electrons originating from reduced cytochrome c in the intermembrane space (IMS) are transferred via the dinuclear copper A center (CU(A)) of subunit 2 and heme A of subunit 1 to the active site in subunit 1, a binuclear center (BNC) formed by heme A3 and copper B (CU(B)). The BNC reduces molecular oxygen to 2 water molecules using 4 electrons from cytochrome c in the IMS and 4 protons from the mitochondrial matrix. This Gerbilliscus robustus (Fringe-tailed gerbil) protein is Cytochrome c oxidase subunit 2 (MT-CO2).